Consider the following 140-residue polypeptide: Beta/delta-urticatoxin-De2a (140 aa).

A signal peptide spans 1–18 (MKTSTALVLLLALTATSA). A propeptide spanning residues 19–78 (SSGDHQFIDEQNIMNVAEGKNVISSLSSSGGGDDAAAIMESVLVNGGNRKMVFMMVSGSQ) is cleaved from the precursor. Disulfide bonds link C81-C95, C88-C100, C94-C108, C113-C127, C120-C131, and C126-C139.

This sequence belongs to the urticatoxin-2 family. Expressed in trichomes, that are stiff epidermal hairs located on the surface of petioles and leaves.

The protein localises to the secreted. In terms of biological role, plant defense neurotoxin that causes pain and systemic symptoms in mammals via modulation of voltage-gated sodium channels (Nav). Potent modulator of human Nav1.5/SCN5A (EC(50)=55 nM), Nav1.6/SCN8A (EC(50)=0.86 nM), and Nav1.7/SCN9A (EC(50)=208 nM), where it shifts the activation threshold to more negative potentials and delays fast inactivation. Also shifts the voltage-dependence of steady-state fast inactivation of Nav1.6/SCN8A, but not that of Nav1.5/SCN5A or Nav1.7/SCN9A. On Nav1.7/SCN9A, principally acts by binding to extracellular loops of domain IV (Nav site 3). In vivo, intraplantar injection into mice causes numerous dose-dependent, immediate, and long-lasting spontaneous pain behaviors, while no swelling is observed in the injected paw. At the highest doses tested, systemic symptoms including hypokinesia and hypersalivation are observed. In Dendrocnide excelsa (Giant stinging tree), this protein is Beta/delta-urticatoxin-De2a.